Reading from the N-terminus, the 228-residue chain is Triosephosphate isomerase (228 aa).

Residue asparagine 12–lysine 14 participates in substrate binding. Histidine 96 (electrophile) is an active-site residue. Glutamate 144 functions as the Proton acceptor in the catalytic mechanism. Substrate-binding positions include isoleucine 149, glycine 184, and alanine 205 to serine 206.

The protein belongs to the triosephosphate isomerase family. In terms of assembly, homotetramer; dimer of dimers.

The protein resides in the cytoplasm. It catalyses the reaction D-glyceraldehyde 3-phosphate = dihydroxyacetone phosphate. It functions in the pathway carbohydrate biosynthesis; gluconeogenesis. Its pathway is carbohydrate degradation; glycolysis; D-glyceraldehyde 3-phosphate from glycerone phosphate: step 1/1. Its function is as follows. Involved in the gluconeogenesis. Catalyzes stereospecifically the conversion of dihydroxyacetone phosphate (DHAP) to D-glyceraldehyde-3-phosphate (G3P). The protein is Triosephosphate isomerase of Pyrococcus furiosus (strain ATCC 43587 / DSM 3638 / JCM 8422 / Vc1).